A 604-amino-acid chain; its full sequence is 3-hydroxy-3-methylglutaryl-coenzyme A reductase 2 (604 aa).

2 consecutive transmembrane segments (helical) span residues 47-67 and 91-111; these read LPLY…MYFL and AIVS…IGFV. The segment at 112–188 is linker; the sequence is QTFVARGNND…APLVTPAASE (77 aa). N-linked (GlcNAc...) asparagine glycosylation occurs at Asn120. A catalytic region spans residues 189–604; that stretch reads EDEEIIKSVV…STKDVTKASS (416 aa). The active-site Charge relay system is the Glu283. Asn347 is a glycosylation site (N-linked (GlcNAc...) asparagine). Residue Lys415 is the Charge relay system of the active site. Asn460 is a glycosylation site (N-linked (GlcNAc...) asparagine). The active-site Charge relay system is Asp491. Residue His589 is the Proton donor of the active site. Asn593 is a glycosylation site (N-linked (GlcNAc...) asparagine).

Belongs to the HMG-CoA reductase family.

The protein resides in the endoplasmic reticulum membrane. It catalyses the reaction (R)-mevalonate + 2 NADP(+) + CoA = (3S)-3-hydroxy-3-methylglutaryl-CoA + 2 NADPH + 2 H(+). The protein operates within metabolic intermediate biosynthesis; (R)-mevalonate biosynthesis; (R)-mevalonate from acetyl-CoA: step 3/3. Functionally, catalyzes the synthesis of mevalonate. The specific precursor of all isoprenoid compounds present in plants. This chain is 3-hydroxy-3-methylglutaryl-coenzyme A reductase 2 (HMGR2), found in Capsicum annuum (Capsicum pepper).